Consider the following 264-residue polypeptide: 5'-nucleotidase SurE (264 aa).

Residues Asp10, Asp11, Ser43, and Asn99 each coordinate a divalent metal cation.

Belongs to the SurE nucleotidase family. A divalent metal cation serves as cofactor.

The protein localises to the cytoplasm. The catalysed reaction is a ribonucleoside 5'-phosphate + H2O = a ribonucleoside + phosphate. Functionally, nucleotidase that shows phosphatase activity on nucleoside 5'-monophosphates. The sequence is that of 5'-nucleotidase SurE from Methanococcus maripaludis (strain C6 / ATCC BAA-1332).